The sequence spans 394 residues: Elongation factor Tu (394 aa).

Positions 10 to 204 (KPHVNVGTIG…AVDSYIPQPE (195 aa)) constitute a tr-type G domain. The interval 19–26 (GHVDHGKT) is G1. GTP is bound at residue 19-26 (GHVDHGKT). Position 26 (Thr26) interacts with Mg(2+). Positions 60 to 64 (GITIS) are G2. The interval 81–84 (DCPG) is G3. GTP-binding positions include 81 to 85 (DCPGH) and 136 to 139 (NKCD). Residues 136–139 (NKCD) are G4. The G5 stretch occupies residues 174–176 (SAV).

The protein belongs to the TRAFAC class translation factor GTPase superfamily. Classic translation factor GTPase family. EF-Tu/EF-1A subfamily. Monomer.

The protein localises to the cytoplasm. It catalyses the reaction GTP + H2O = GDP + phosphate + H(+). Functionally, GTP hydrolase that promotes the GTP-dependent binding of aminoacyl-tRNA to the A-site of ribosomes during protein biosynthesis. This chain is Elongation factor Tu, found in Akkermansia muciniphila (strain ATCC BAA-835 / DSM 22959 / JCM 33894 / BCRC 81048 / CCUG 64013 / CIP 107961 / Muc).